The chain runs to 168 residues: Crossover junction endodeoxyribonuclease RuvC (168 aa).

Active-site residues include aspartate 11, glutamate 71, and aspartate 144. Positions 11, 71, and 144 each coordinate Mg(2+).

Belongs to the RuvC family. As to quaternary structure, homodimer which binds Holliday junction (HJ) DNA. The HJ becomes 2-fold symmetrical on binding to RuvC with unstacked arms; it has a different conformation from HJ DNA in complex with RuvA. In the full resolvosome a probable DNA-RuvA(4)-RuvB(12)-RuvC(2) complex forms which resolves the HJ. Requires Mg(2+) as cofactor.

The protein localises to the cytoplasm. The enzyme catalyses Endonucleolytic cleavage at a junction such as a reciprocal single-stranded crossover between two homologous DNA duplexes (Holliday junction).. In terms of biological role, the RuvA-RuvB-RuvC complex processes Holliday junction (HJ) DNA during genetic recombination and DNA repair. Endonuclease that resolves HJ intermediates. Cleaves cruciform DNA by making single-stranded nicks across the HJ at symmetrical positions within the homologous arms, yielding a 5'-phosphate and a 3'-hydroxyl group; requires a central core of homology in the junction. The consensus cleavage sequence is 5'-(A/T)TT(C/G)-3'. Cleavage occurs on the 3'-side of the TT dinucleotide at the point of strand exchange. HJ branch migration catalyzed by RuvA-RuvB allows RuvC to scan DNA until it finds its consensus sequence, where it cleaves and resolves the cruciform DNA. This is Crossover junction endodeoxyribonuclease RuvC from Protochlamydia amoebophila (strain UWE25).